The primary structure comprises 202 residues: Osteoclast-stimulating factor 1 (202 aa).

The SH3 domain occupies 12 to 71 (GQVKVFRALYTFEPRTPDELYFEEGDIIYISDMSDTNWWKGTCKGRTGLIPSNYVAEQAE). 3 ANK repeats span residues 72–101 (SIDNPLHEAAKRGNLSWLRECLDNQVGVNG), 105–135 (AGNTALYWACHGGHKDIVDVLFTQANLELNQ), and 139–168 (LGDTALHAAAWKGYADIVEMLLAKGARTDL).

It is found in the cytoplasm. Its function is as follows. Induces bone resorption, acting probably through a signaling cascade which results in the secretion of factor(s) enhancing osteoclast formation and activity. The sequence is that of Osteoclast-stimulating factor 1 (OSTF1) from Gallus gallus (Chicken).